The sequence spans 150 residues: Ribonuclease pancreatic delta-type (150 aa).

The first 25 residues, 1–25 (MGLEKSFILFSLLVLVLGWVQPSLG), serve as a signal peptide directing secretion. Arginine 35 contacts substrate. Residue histidine 37 is the Proton acceptor of the active site. Intrachain disulfides connect cysteine 51–cysteine 110, cysteine 65–cysteine 121, cysteine 83–cysteine 136, and cysteine 90–cysteine 98. Substrate contacts are provided by residues 66–70 (KPVNT) and lysine 91. The Proton donor role is filled by histidine 145.

It belongs to the pancreatic ribonuclease family. In terms of assembly, monomer.

The protein resides in the secreted. The enzyme catalyses an [RNA] containing cytidine + H2O = an [RNA]-3'-cytidine-3'-phosphate + a 5'-hydroxy-ribonucleotide-3'-[RNA].. It carries out the reaction an [RNA] containing uridine + H2O = an [RNA]-3'-uridine-3'-phosphate + a 5'-hydroxy-ribonucleotide-3'-[RNA].. Endonuclease that catalyzes the cleavage of RNA on the 3' side of pyrimidine nucleotides. Acts on single-stranded and double-stranded RNA. In Rattus tiomanicus (Malayan field rat), this protein is Ribonuclease pancreatic delta-type.